Here is a 346-residue protein sequence, read N- to C-terminus: tRNA pseudouridine synthase D (346 aa).

D83 functions as the Nucleophile in the catalytic mechanism. The TRUD domain maps to 159 to 305 (GVPNYFGEQR…LKQERRALRV (147 aa)).

It belongs to the pseudouridine synthase TruD family.

The enzyme catalyses uridine(13) in tRNA = pseudouridine(13) in tRNA. In terms of biological role, responsible for synthesis of pseudouridine from uracil-13 in transfer RNAs. The chain is tRNA pseudouridine synthase D from Hydrogenovibrio crunogenus (strain DSM 25203 / XCL-2) (Thiomicrospira crunogena).